The sequence spans 611 residues: Chaperone protein DnaK (611 aa).

T172 is subject to Phosphothreonine; by autocatalysis. The segment at 575–611 (AAQAAQAQQDGGNESADKQDDNVVDADYEEVNDDDKK) is disordered. A compositionally biased stretch (acidic residues) spans 596–611 (NVVDADYEEVNDDDKK).

The protein belongs to the heat shock protein 70 family.

Functionally, acts as a chaperone. The sequence is that of Chaperone protein DnaK from Shouchella clausii (strain KSM-K16) (Alkalihalobacillus clausii).